The chain runs to 826 residues: Hyaluronate lyase HylA (826 aa).

The segment at residues 1–36 (MFDIPYQVPSRRTFLSLSALSAIAIAASPEMPDAFA) is a signal peptide (tat-type signal). Active-site residues include His-276, Tyr-285, and Arg-339. A disordered region spans residues 800–826 (LSPALPKPTKPSLRASSYPLGLPHTSS).

Belongs to the polysaccharide lyase 8 family. Post-translationally, predicted to be exported by the Tat system. The position of the signal peptide cleavage has not been experimentally proven.

The protein resides in the secreted. The enzyme catalyses [hyaluronan](n) = n 3-(4-deoxy-beta-D-gluc-4-enuronosyl)-N-acetyl-D-glucosamine + H2O. In terms of biological role, degrades hyaluronic acid (HA) into large-sized HA oligosaccharides, including tetrasaccharide HA (HA-4), hexasaccharide HA (HA-6) and higher molecular weight HA, and to a lesser extent into HA disaccharides (HA-2). Involved in the pathogenesis of acne. HA degradation products induce secretion of proinflammatory cytokines (IL-6, IL-8 and TNF-alpha) from human HaCaT keratinocyte cell line and from mouse bone marrow derived macrophages (BMDMs). Produced HA fragments also direct robust TLR2-dependent inflammation in the mouse model of acne. This Cutibacterium acnes (Propionibacterium acnes) protein is Hyaluronate lyase HylA.